The chain runs to 177 residues: Nucleoside triphosphate/diphosphate phosphatase (177 aa).

The Proton donor role is filled by arginine 23. The Mg(2+) site is built by asparagine 87, aspartate 103, aspartate 105, aspartate 107, aspartate 120, and glutamate 123.

Belongs to the Ntdp family. It depends on Mg(2+) as a cofactor.

It catalyses the reaction a ribonucleoside 5'-triphosphate + H2O = a ribonucleoside 5'-diphosphate + phosphate + H(+). It carries out the reaction a ribonucleoside 5'-diphosphate + H2O = a ribonucleoside 5'-phosphate + phosphate + H(+). Its function is as follows. Has nucleoside phosphatase activity towards nucleoside triphosphates and nucleoside diphosphates. The polypeptide is Nucleoside triphosphate/diphosphate phosphatase (Streptococcus pneumoniae serotype 19F (strain G54)).